Reading from the N-terminus, the 486-residue chain is Betaine aldehyde dehydrogenase (486 aa).

Thr-23 and Asp-90 together coordinate K(+). 147 to 149 (GAW) contributes to the NAD(+) binding site. The Charge relay system role is filled by Lys-159. NAD(+) contacts are provided by residues 173 to 176 (KPSE) and 226 to 229 (ESGT). Leu-241 is a binding site for K(+). The active-site Proton acceptor is the Glu-247. Residues Gly-249, Cys-281, and Glu-382 each coordinate NAD(+). Cys-281 acts as the Nucleophile in catalysis. Residue Cys-281 is modified to Cysteine sulfenic acid (-SOH). Residues Lys-452 and Gly-455 each coordinate K(+). Catalysis depends on Glu-459, which acts as the Charge relay system.

Belongs to the aldehyde dehydrogenase family. In terms of assembly, dimer of dimers. Requires K(+) as cofactor.

The catalysed reaction is betaine aldehyde + NAD(+) + H2O = glycine betaine + NADH + 2 H(+). The protein operates within amine and polyamine biosynthesis; betaine biosynthesis via choline pathway; betaine from betaine aldehyde: step 1/1. Involved in the biosynthesis of the osmoprotectant glycine betaine. Catalyzes the irreversible oxidation of betaine aldehyde to the corresponding acid. In Vibrio campbellii (strain ATCC BAA-1116), this protein is Betaine aldehyde dehydrogenase.